The sequence spans 465 residues: Hepatocyte nuclear factor 6 (465 aa).

Disordered regions lie at residues 15–84 (GVSH…GPLH) and 119–141 (SDKF…HQRL). The segment covering 123-140 (PHHHHHHHHHHHPHHHQR) has biased composition (basic residues). The segment at residues 283 to 369 (GSNSGQMEEI…QRMSALRLAA (87 aa)) is a DNA-binding region (CUT). Residues 385–444 (PKKPRLVFTDVQRRTLHAIFKENKRPSKELQITISQQLGLELSTVSNFFMNARRRSLDKW) constitute a DNA-binding region (homeobox). The interval 442 to 465 (DKWQDEGSSNSGNSSSSSSTCTKA) is disordered. Residues 448–465 (GSSNSGNSSSSSSTCTKA) show a composition bias toward low complexity.

The protein belongs to the CUT homeobox family. In terms of assembly, binds DNA as a monomer. As to expression, expressed in liver, brain, spleen and testis.

Its subcellular location is the nucleus. Its function is as follows. Transcriptional activator. Binds the consensus sequence 5'-DHWATTGAYTWWD-3' on a variety of gene promoters such as those of HNF3B and TTR. Important for liver genes transcription. The affinity of HNF-6-alpha and HNF-6-beta for DNA differs depending on the target sequence. The polypeptide is Hepatocyte nuclear factor 6 (Onecut1) (Rattus norvegicus (Rat)).